We begin with the raw amino-acid sequence, 416 residues long: Creatine kinase U-type, mitochondrial (416 aa).

The N-terminal 39 residues, 1-39 (MAGPFSRLLSARPGLRLLALAGAGSLAAGFLLRPEPIRA), are a transit peptide targeting the mitochondrion. A cardiolipin-binding region spans residues 40–63 (ASERRRQYPPSAEYPDLRKHNNCM). A Phosphagen kinase N-terminal domain is found at 44-131 (RRQYPPSAEY…FDPVIQERHN (88 aa)). At Ser151 the chain carries Phosphoserine. The Phosphagen kinase C-terminal domain occupies 158–400 (YVLSSRVRTG…NYLIDCERRL (243 aa)). An ATP-binding site is contributed by 161 to 165 (SSRVR). At Ser196 the chain carries Phosphoserine. Thr213 is subject to Phosphothreonine. His224 contacts ATP. Ser232 carries the phosphoserine modification. ATP-binding positions include Arg269, Arg325, and 353–358 (RGTGGV). Phosphothreonine is present on Thr355. Ser365 is subject to Phosphoserine. An ATP-binding site is contributed by Asp368.

The protein belongs to the ATP:guanido phosphotransferase family. In terms of assembly, exists as an octamer composed of four MTCK homodimers.

It localises to the mitochondrion inner membrane. The enzyme catalyses creatine + ATP = N-phosphocreatine + ADP + H(+). In terms of biological role, reversibly catalyzes the transfer of phosphate between ATP and various phosphogens (e.g. creatine phosphate). Creatine kinase isoenzymes play a central role in energy transduction in tissues with large, fluctuating energy demands, such as skeletal muscle, heart, brain and spermatozoa. The chain is Creatine kinase U-type, mitochondrial (CKMT1) from Sus scrofa (Pig).